Here is a 245-residue protein sequence, read N- to C-terminus: Putative insertion sequence ATP-binding protein y4pL (245 aa).

106–113 lines the ATP pocket; that stretch reads GPSGVGKS.

The protein belongs to the IS21/IS1162 putative ATP-binding protein family.

This Sinorhizobium fredii (strain NBRC 101917 / NGR234) protein is Putative insertion sequence ATP-binding protein y4pL.